A 526-amino-acid polypeptide reads, in one-letter code: Probable feruloyl esterase B-2 (526 aa).

The signal sequence occupies residues 1–18 (MTKLSLLPLLTLASAVLA). Disulfide bonds link C27-C74 and C62-C113. A glycan (N-linked (GlcNAc...) asparagine) is linked at N52. N137 carries an N-linked (GlcNAc...) asparagine glycan. Cystine bridges form between C186/C441, C255/C272, C281/C291, and C503/C525. The active-site Acyl-ester intermediate is the S187. N-linked (GlcNAc...) asparagine glycosylation is present at N233. Positions 256, 259, 261, 263, and 265 each coordinate Ca(2+). The N-linked (GlcNAc...) asparagine glycan is linked to N311. Residues D400 and H440 each act as charge relay system in the active site. N-linked (GlcNAc...) asparagine glycosylation occurs at N516.

This sequence belongs to the tannase family.

It is found in the secreted. The catalysed reaction is feruloyl-polysaccharide + H2O = ferulate + polysaccharide.. Functionally, involved in degradation of plant cell walls. Hydrolyzes the feruloyl-arabinose ester bond in arabinoxylans as well as the feruloyl-galactose and feruloyl-arabinose ester bonds in pectin. In Aspergillus fumigatus (strain CBS 144.89 / FGSC A1163 / CEA10) (Neosartorya fumigata), this protein is Probable feruloyl esterase B-2 (faeB-2).